The primary structure comprises 358 residues: Ion-translocating oxidoreductase complex subunit D (358 aa).

3 consecutive transmembrane segments (helical) span residues 24-44 (ILAM…GVVL), 79-99 (LTAL…IIII), and 125-145 (IGYV…MPPI). Threonine 186 is modified (FMN phosphoryl threonine). The next 5 helical transmembrane spans lie at 220 to 240 (FAQG…FLIL), 248 to 268 (IPVA…FTGF), 271 to 291 (LSAI…FIAT), 297 to 317 (SITP…VYLI), and 321 to 341 (GNYP…VPLI).

The protein belongs to the NqrB/RnfD family. As to quaternary structure, the complex is composed of six subunits: RnfA, RnfB, RnfC, RnfD, RnfE and RnfG. FMN serves as cofactor.

Its subcellular location is the cell inner membrane. Its function is as follows. Part of a membrane-bound complex that couples electron transfer with translocation of ions across the membrane. This chain is Ion-translocating oxidoreductase complex subunit D, found in Haemophilus influenzae (strain ATCC 51907 / DSM 11121 / KW20 / Rd).